We begin with the raw amino-acid sequence, 132 residues long: Small ribosomal subunit protein uS8 (132 aa).

The protein belongs to the universal ribosomal protein uS8 family. As to quaternary structure, part of the 30S ribosomal subunit. Contacts proteins S5 and S12.

In terms of biological role, one of the primary rRNA binding proteins, it binds directly to 16S rRNA central domain where it helps coordinate assembly of the platform of the 30S subunit. The polypeptide is Small ribosomal subunit protein uS8 (Corynebacterium jeikeium (strain K411)).